The sequence spans 674 residues: DNA ligase (674 aa).

NAD(+) is bound by residues Asp34 to Asp38, Ser84 to Leu85, and Glu116. Lys118 (N6-AMP-lysine intermediate) is an active-site residue. Arg139, Glu174, Lys291, and Lys315 together coordinate NAD(+). Residues Cys409, Cys412, Cys425, and Cys430 each contribute to the Zn(2+) site. A BRCT domain is found at Arg586–Ala674.

It belongs to the NAD-dependent DNA ligase family. LigA subfamily. Mg(2+) is required as a cofactor. The cofactor is Mn(2+).

It carries out the reaction NAD(+) + (deoxyribonucleotide)n-3'-hydroxyl + 5'-phospho-(deoxyribonucleotide)m = (deoxyribonucleotide)n+m + AMP + beta-nicotinamide D-nucleotide.. Functionally, DNA ligase that catalyzes the formation of phosphodiester linkages between 5'-phosphoryl and 3'-hydroxyl groups in double-stranded DNA using NAD as a coenzyme and as the energy source for the reaction. It is essential for DNA replication and repair of damaged DNA. The polypeptide is DNA ligase (Thermus sp. (strain AK16D)).